Reading from the N-terminus, the 490-residue chain is Endoglucanase 13 (490 aa).

The N-terminal stretch at 1 to 26 (MSQLKNGSSQCLWTSICIVLIVMSMA) is a signal peptide. N-linked (GlcNAc...) asparagine glycosylation is present at N6. D86 acts as the Nucleophile in catalysis. Residues H412, D464, and E473 contribute to the active site.

It belongs to the glycosyl hydrolase 9 (cellulase E) family.

The protein resides in the secreted. It catalyses the reaction Endohydrolysis of (1-&gt;4)-beta-D-glucosidic linkages in cellulose, lichenin and cereal beta-D-glucans.. This is Endoglucanase 13 from Arabidopsis thaliana (Mouse-ear cress).